A 348-amino-acid polypeptide reads, in one-letter code: UDP-glucose 4-epimerase (348 aa).

NAD(+) contacts are provided by residues 12 to 14 (GYI), 33 to 37 (DNFHN), 66 to 67 (DI), Phe-88, and Lys-92. Substrate is bound at residue 132-134 (SAT). Tyr-157 serves as the catalytic Proton acceptor. NAD(+)-binding residues include Lys-161 and Tyr-185. Substrate contacts are provided by residues 185 to 187 (YFN), 206 to 208 (NNL), 224 to 226 (NVF), Arg-239, and 300 to 303 (REGD).

This sequence belongs to the NAD(P)-dependent epimerase/dehydratase family. Homodimer. The cofactor is NAD(+).

The catalysed reaction is UDP-alpha-D-glucose = UDP-alpha-D-galactose. It catalyses the reaction UDP-N-acetyl-alpha-D-glucosamine = UDP-N-acetyl-alpha-D-galactosamine. It functions in the pathway carbohydrate metabolism; galactose metabolism. Catalyzes two distinct but analogous reactions: the reversible epimerization of UDP-glucose to UDP-galactose and the reversible epimerization of UDP-N-acetylglucosamine to UDP-N-acetylgalactosamine. The reaction with UDP-Gal plays a critical role in the Leloir pathway of galactose catabolism in which galactose is converted to the glycolytic intermediate glucose 6-phosphate. It contributes to the catabolism of dietary galactose and enables the endogenous biosynthesis of both UDP-Gal and UDP-GalNAc when exogenous sources are limited. Both UDP-sugar interconversions are important in the synthesis of glycoproteins and glycolipids. In Pongo abelii (Sumatran orangutan), this protein is UDP-glucose 4-epimerase (GALE).